The following is a 459-amino-acid chain: Chromosomal replication initiator protein DnaA (459 aa).

Positions 1 to 73 are domain I, interacts with DnaA modulators; sequence MEIPIESLWS…AHAVQDILGH (73 aa). Residues 73–117 form a domain II region; that stretch reads HPVGIYITVAQGDEVSHFSEREVSWESTNPSSIPESLPHHNHKTT. The interval 118 to 334 is domain III, AAA+ region; sequence ELNSKYVFSR…GALIRAVAYI (217 aa). Residues glycine 162, glycine 164, lysine 165, and threonine 166 each coordinate ATP. The tract at residues 335 to 459 is domain IV, binds dsDNA; sequence SIWGLPMTVE…INMTSRSQKS (125 aa).

Belongs to the DnaA family. Oligomerizes as a right-handed, spiral filament on DNA at oriC.

It localises to the cytoplasm. Its function is as follows. Plays an essential role in the initiation and regulation of chromosomal replication. ATP-DnaA binds to the origin of replication (oriC) to initiate formation of the DNA replication initiation complex once per cell cycle. Binds the DnaA box (a 9 base pair repeat at the origin) and separates the double-stranded (ds)DNA. Forms a right-handed helical filament on oriC DNA; dsDNA binds to the exterior of the filament while single-stranded (ss)DNA is stabiized in the filament's interior. The ATP-DnaA-oriC complex binds and stabilizes one strand of the AT-rich DNA unwinding element (DUE), permitting loading of DNA polymerase. After initiation quickly degrades to an ADP-DnaA complex that is not apt for DNA replication. Binds acidic phospholipids. The protein is Chromosomal replication initiator protein DnaA of Nostoc punctiforme (strain ATCC 29133 / PCC 73102).